The chain runs to 268 residues: Putative carbamate hydrolase RutD (268 aa).

The AB hydrolase-1 domain occupies Pro15–Ser119.

This sequence belongs to the AB hydrolase superfamily. Hydrolase RutD family.

The catalysed reaction is carbamate + 2 H(+) = NH4(+) + CO2. Functionally, involved in pyrimidine catabolism. May facilitate the hydrolysis of carbamate, a reaction that can also occur spontaneously. The polypeptide is Putative carbamate hydrolase RutD (Cronobacter sakazakii (strain ATCC BAA-894) (Enterobacter sakazakii)).